We begin with the raw amino-acid sequence, 293 residues long: MTNQQDYTQDNDKLYRYLFQHRAVRGEWVRLNKTFTDTLNTHQYPKAVQDLLGEMMVATNLLTATLKFDGNITVQIQGDGPLRLALVNGNDQQQIRALARVDGNITENMSLHNMIGKGVLVITIAPKEGERYQGVISLDKPTITECLEDYFVRSEQLQTQLIIRTGEYEGKPVAAGMLLQIMPDGSGTPEDFEHLTTLAATVKDEELFGLPAEELLYRLYHEETVNLYPAQDVQFFCGCSAERSSSALLLISDEEIDEILAEHKGSIDMQCECCGTHYFFNKEAIEKLKSTKV.

2 disulfide bridges follow: cysteine 237–cysteine 239 and cysteine 271–cysteine 274.

Belongs to the HSP33 family. In terms of processing, under oxidizing conditions two disulfide bonds are formed involving the reactive cysteines. Under reducing conditions zinc is bound to the reactive cysteines and the protein is inactive.

The protein resides in the cytoplasm. Its function is as follows. Redox regulated molecular chaperone. Protects both thermally unfolding and oxidatively damaged proteins from irreversible aggregation. Plays an important role in the bacterial defense system toward oxidative stress. This Haemophilus influenzae (strain PittGG) protein is 33 kDa chaperonin.